A 170-amino-acid polypeptide reads, in one-letter code: Adenine phosphoribosyltransferase (170 aa).

This sequence belongs to the purine/pyrimidine phosphoribosyltransferase family. As to quaternary structure, homodimer.

It localises to the cytoplasm. The enzyme catalyses AMP + diphosphate = 5-phospho-alpha-D-ribose 1-diphosphate + adenine. It participates in purine metabolism; AMP biosynthesis via salvage pathway; AMP from adenine: step 1/1. In terms of biological role, catalyzes a salvage reaction resulting in the formation of AMP, that is energically less costly than de novo synthesis. The polypeptide is Adenine phosphoribosyltransferase (Bacillus velezensis (strain DSM 23117 / BGSC 10A6 / LMG 26770 / FZB42) (Bacillus amyloliquefaciens subsp. plantarum)).